Reading from the N-terminus, the 342-residue chain is Farnesyl pyrophosphate synthase 1 (342 aa).

Lysine 48, arginine 51, and glutamine 86 together coordinate isopentenyl diphosphate. The Mg(2+) site is built by aspartate 93 and aspartate 97. Arginine 102 is a binding site for dimethylallyl diphosphate. An isopentenyl diphosphate-binding site is contributed by arginine 103. Dimethylallyl diphosphate contacts are provided by lysine 190, threonine 191, glutamine 229, lysine 246, and lysine 255.

This sequence belongs to the FPP/GGPP synthase family. Mg(2+) is required as a cofactor.

Its subcellular location is the cytoplasm. The enzyme catalyses isopentenyl diphosphate + dimethylallyl diphosphate = (2E)-geranyl diphosphate + diphosphate. It carries out the reaction isopentenyl diphosphate + (2E)-geranyl diphosphate = (2E,6E)-farnesyl diphosphate + diphosphate. The protein operates within isoprenoid biosynthesis; farnesyl diphosphate biosynthesis; farnesyl diphosphate from geranyl diphosphate and isopentenyl diphosphate: step 1/1. It participates in isoprenoid biosynthesis; geranyl diphosphate biosynthesis; geranyl diphosphate from dimethylallyl diphosphate and isopentenyl diphosphate: step 1/1. Functionally, catalyzes the sequential condensation of isopentenyl pyrophosphate with the allylic pyrophosphates, dimethylallyl pyrophosphate, and then with the resultant geranylpyrophosphate to the ultimate product farnesyl pyrophosphate. The protein is Farnesyl pyrophosphate synthase 1 (FPS1) of Parthenium argentatum (Guayule rubber plant).